The primary structure comprises 382 residues: Serine/threonine-protein kinase US3 homolog (382 aa).

The segment covering M1–T10 has biased composition (basic and acidic residues). The segment at M1–D75 is disordered. The segment covering W12 to D24 has biased composition (polar residues). Acidic residues predominate over residues A45–D75. A Protein kinase domain is found at Y93–F379. ATP contacts are provided by residues L99–V107 and K122. D207 serves as the catalytic Proton acceptor.

It belongs to the protein kinase superfamily. Ser/Thr protein kinase family. Phosphorylated by protein 49; this phosphorylation regulates subsequent phosphorylation of proteins 26 and 29 by US3 homolog. Autophosphorylated.

The protein localises to the host cytoplasm. Its subcellular location is the host nucleus. The enzyme catalyses L-seryl-[protein] + ATP = O-phospho-L-seryl-[protein] + ADP + H(+). The catalysed reaction is L-threonyl-[protein] + ATP = O-phospho-L-threonyl-[protein] + ADP + H(+). In terms of biological role, multifunctional serine/threonine kinase that plays a role in several processes including egress of virus particles from the nucleus, modulation of the actin cytoskeleton and inhibition of apoptosis. Phosphorylates protein 26 and 29, two critical regulators of capsid budding from nucleus to endoplasmic reticulum, thereby facilitating virion egress. Modulates and redistributes host components of the nuclear envelope, including LMNA, emerin/EMD and the nuclear matrix protein MATR3. Phosphorylates envelope glycoprotein B (gB), probably to direct it to the cell surface. Promotes virus intracellular spread by restructuring host cell cytoskeleton. Blocks host apoptosis to extend cell survival and allow efficient viral replication. Promotes viral gene expression by phosphorylating host HDAC2 to reduce viral genome silencing. This chain is Serine/threonine-protein kinase US3 homolog, found in Equine herpesvirus 1 (strain Ab4p) (EHV-1).